The primary structure comprises 53 residues: MEQKNKKNTIPWIWGFNVYAENWNGRLAMISFLLIICVEFITNKNVLDLVKLN.

This sequence belongs to the ELIP/psbS family.

The protein resides in the plastid. It localises to the chloroplast. Possible role in chlorophyll and/or carotenoid binding. This is an uncharacterized protein from Guillardia theta (Cryptophyte).